The following is a 293-amino-acid chain: Nucleotide-binding protein LBA0691 (293 aa).

13-20 (GMSGAGKT) provides a ligand contact to ATP. 63–66 (DLRV) serves as a coordination point for GTP.

Belongs to the RapZ-like family.

Its function is as follows. Displays ATPase and GTPase activities. In Lactobacillus acidophilus (strain ATCC 700396 / NCK56 / N2 / NCFM), this protein is Nucleotide-binding protein LBA0691.